The sequence spans 88 residues: Small ribosomal subunit protein bS20 (88 aa).

The protein belongs to the bacterial ribosomal protein bS20 family.

Binds directly to 16S ribosomal RNA. This chain is Small ribosomal subunit protein bS20, found in Rhodopseudomonas palustris (strain BisA53).